The primary structure comprises 652 residues: Aorsin (652 aa).

Positions 1–22 are cleaved as a signal peptide; sequence MRPLSHLSFFNGLLLGLSALSA. The propeptide at 23 to 215 is removed in mature form; sequence ATSVVHERRE…PRPIQQHDVK (193 aa). N-linked (GlcNAc...) asparagine glycosylation occurs at Asn112. Residues 177 to 211 are disordered; sequence VNLNPSSGKPSSIRRRAAASKKTKLPARGPRPIQQ. The span at 188–201 shows a compositional bias: basic residues; it reads SIRRRAAASKKTKL. 2 N-linked (GlcNAc...) asparagine glycosylation sites follow: Asn218 and Asn247. Residues 225–651 enclose the Peptidase S53 domain; sequence LITPECIRAL…PKMLKLWLDL (427 aa). Active-site charge relay system residues include Glu301 and Asp305. N-linked (GlcNAc...) asparagine glycans are attached at residues Asn331 and Asn445. The Charge relay system role is filled by Ser569. 2 residues coordinate Ca(2+): Asp610 and Ile611. Asn613 carries N-linked (GlcNAc...) asparagine glycosylation. The Ca(2+) site is built by Gly629 and Asp631.

Ca(2+) serves as cofactor. In terms of processing, N-glycosylated. O-glycosylated.

It is found in the secreted. The protein resides in the extracellular space. With respect to regulation, inhibited by antipain and leupeptin. Functionally, serine endopeptidase which hydrolyzes a range of fluorogenic peptide substrates containing the basic residues arginine or lysine at the P1 position and prefers paired basic resides. Also hydrolyzes clupeine and salmine, activates plasminogen and converts trypsinogen to trypsin. The protein is Aorsin of Aspergillus oryzae (strain ATCC 42149 / RIB 40) (Yellow koji mold).